A 656-amino-acid chain; its full sequence is PAN2-PAN3 deadenylation complex subunit PAN3 (656 aa).

The segment at 15–44 adopts a C3H1-type zinc-finger fold; that stretch reads SFKGTQCRNIIIHGYCKFENEGCQFNHGNS. Residues 71–104 form a disordered region; it reads KTSSSFTPGKSPAVRSPDFSSLPAFQPGAPVNDQ. A PABPC-interacting motif-2 (PAM-2) motif is present at residues 128 to 148; that stretch reads AFAPSFNPYASESFTPSVSAG. Positions 271–525 are pseudokinase domain; that stretch reads QVFPRGSLPD…NIEDFTKLFS (255 aa). ATP-binding positions include Arg325, 375-382, and 428-429; these read DYYPQSQS and KK. Residues 526–564 adopt a coiled-coil conformation; the sequence is HKVLSVVNSLQYNSEYLEQQLSRELENARLFRLMCKLNA. The interval 565-656 is knob domain; the sequence is IYGRLESRID…IDSTFRALTQ (92 aa).

This sequence belongs to the protein kinase superfamily. PAN3 family. As to quaternary structure, homodimer. Forms a heterotrimer with a catalytic subunit PAN2 to form the poly(A)-nuclease (PAN) deadenylation complex. Interacts (via PAM-2 motif) with poly(A)-binding protein PAB1 (via PABC domain), conferring substrate specificity of the enzyme complex.

Its subcellular location is the cytoplasm. Its function is as follows. Regulatory subunit of the poly(A)-nuclease (PAN) deadenylation complex, one of two cytoplasmic mRNA deadenylases involved in mRNA turnover. PAN specifically shortens poly(A) tails of RNA and the activity is stimulated by poly(A)-binding protein PAB1. PAN deadenylation is followed by rapid degradation of the shortened mRNA tails by the CCR4-NOT complex. Deadenylated mRNAs are then degraded by two alternative mechanisms, namely exosome-mediated 3'-5' exonucleolytic degradation, or deadenylation-dependent mRNA decaping and subsequent 5'-3' exonucleolytic degradation by XRN1. May also be involved in post-transcriptional maturation of mRNA poly(A) tails. PAN3 acts as a positive regulator for PAN activity, recruiting the catalytic subunit PAN2 to mRNA via its interaction with RNA and with PAB1. This is PAN2-PAN3 deadenylation complex subunit PAN3 from Kluyveromyces lactis (strain ATCC 8585 / CBS 2359 / DSM 70799 / NBRC 1267 / NRRL Y-1140 / WM37) (Yeast).